A 1036-amino-acid chain; its full sequence is Phytosulfokine receptor 2 (1036 aa).

A signal peptide spans 1–16 (MVIILLLVFFVGSSVS). 2 N-linked (GlcNAc...) asparagine glycosylation sites follow: asparagine 36 and asparagine 45. LRR repeat units lie at residues 89-111 (ELRVLDLSRNQLKGEVPAEISKL), 113-136 (QLQVLDLSHNLLSGSVLGVVSGLK), 137-159 (LIQSLNISSNSLSGKLSDVGVFP), 160-182 (GLVMLNVSNNLFEGEIHPELCSS), 185-207 (GIQVLDLSMNRLVGNLDGLYNCS), 209-231 (SIQQLHIDSNRLTGQLPDYLYSI), 233-256 (ELEQLSLSGNYLSGELSKNLSNLS), 257-279 (GLKSLLISENRFSDVIPDVFGNL), 281-303 (QLEHLDVSSNKFSGRFPPSLSQC), 305-326 (KLRVLDLRNNSLSGSINLNFTG), 329-351 (DLCVLDLASNHFSGPLPDSLGHC), 353-375 (KMKILSLAKNEFRGKIPDTFKNL), 377-398 (SLLFLSLSNNSFVDFSETMNVL), 403-423 (NLSTLILSKNFIGEEIPNNVT), 427-450 (NLAILALGNCGLRGQIPSWLLNCK), 451-473 (KLEVLDLSWNHFYGTIPHWIGKM), and 475-498 (SLFYIDFSNNTLTGAIPVAITELK). Asparagine 142, asparagine 165, and asparagine 205 each carry an N-linked (GlcNAc...) asparagine glycan. Asparagine 251, asparagine 254, and asparagine 278 each carry an N-linked (GlcNAc...) asparagine glycan. N-linked (GlcNAc...) asparagine glycans are attached at residues asparagine 313 and asparagine 323. Residues asparagine 385, asparagine 403, and asparagine 421 are each glycosylated (N-linked (GlcNAc...) asparagine). Residues asparagine 483, asparagine 504, asparagine 523, asparagine 549, and asparagine 571 are each glycosylated (N-linked (GlcNAc...) asparagine). LRR repeat units lie at residues 561 to 583 (ELHMLDLSRNNFTGTIPDSISGL) and 585 to 606 (NLEVLDLSYNHLYGSIPLSFQS). A helical transmembrane segment spans residues 680–700 (IVVLTISLAIGITLLLSVILL). Threonine 751 carries the phosphothreonine modification. In terms of domain architecture, Protein kinase spans 754 to 1025 (FSQANIIGCG…PLIEEVVTWL (272 aa)). ATP-binding positions include 760–768 (IGCGGFGLV) and lysine 782. A phosphotyrosine mark is found at tyrosine 827 and tyrosine 867. Aspartate 880 serves as the catalytic Proton acceptor. A Phosphotyrosine modification is found at tyrosine 922. Residues 995–1020 (RTVLEMLEIACKCIDHEPRRRPLIEE) form an LRR 20 repeat.

It belongs to the protein kinase superfamily. Ser/Thr protein kinase family.

Its subcellular location is the cell membrane. It catalyses the reaction L-seryl-[protein] + ATP = O-phospho-L-seryl-[protein] + ADP + H(+). It carries out the reaction L-threonyl-[protein] + ATP = O-phospho-L-threonyl-[protein] + ADP + H(+). Its function is as follows. Phytosulfokine receptor with a serine/threonine-protein kinase activity. The polypeptide is Phytosulfokine receptor 2 (PSKR2) (Arabidopsis thaliana (Mouse-ear cress)).